A 272-amino-acid chain; its full sequence is Biglycan (272 aa).

The N-terminal stretch at M1–A16 is a signal peptide. A propeptide spanning residues L17–N37 is cleaved from the precursor. 2 O-linked (Xyl...) (glycosaminoglycan) serine glycosylation sites follow: S42 and S48. The LRRNT domain occupies A55–P91. Intrachain disulfides connect C64–C70 and C68–C77. LRR repeat units lie at residues D92–G113, H116–P137, D138–E161, T162–R183, K186–P209, T210–K232, L233–P254, and V255–N272.

Belongs to the small leucine-rich proteoglycan (SLRP) family. SLRP class I subfamily. Homodimer. Forms a ternary complex with MFAP2 and ELN. Post-translationally, the two attached glycosaminoglycan chains can be either chondroitin sulfate or dermatan sulfate. As to expression, found in several connective tissues, especially in articular cartilages.

The protein localises to the secreted. It is found in the extracellular space. It localises to the extracellular matrix. May be involved in collagen fiber assembly. The polypeptide is Biglycan (BGN) (Sus scrofa (Pig)).